The sequence spans 891 residues: Alanine--tRNA ligase (891 aa).

Positions 564, 568, 678, and 682 each coordinate Zn(2+).

This sequence belongs to the class-II aminoacyl-tRNA synthetase family. Requires Zn(2+) as cofactor.

It localises to the cytoplasm. It catalyses the reaction tRNA(Ala) + L-alanine + ATP = L-alanyl-tRNA(Ala) + AMP + diphosphate. In terms of biological role, catalyzes the attachment of alanine to tRNA(Ala) in a two-step reaction: alanine is first activated by ATP to form Ala-AMP and then transferred to the acceptor end of tRNA(Ala). Also edits incorrectly charged Ser-tRNA(Ala) and Gly-tRNA(Ala) via its editing domain. The sequence is that of Alanine--tRNA ligase from Nitrobacter hamburgensis (strain DSM 10229 / NCIMB 13809 / X14).